The chain runs to 862 residues: Protein PRQFV-amide (862 aa).

The signal sequence occupies residues 1-20 (MSSQLLICSVFVLFTFGPNS). Positions 21–79 (FPSCLAQEQAGNSDATQLSADAKAPESAKDKSGDVQNDGTKSVRSKRDLEIDFGSGDVQ) are excised as a propeptide. The interval 32 to 68 (NSDATQLSADAKAPESAKDKSGDVQNDGTKSVRSKRD) is disordered. Over residues 43–53 (KAPESAKDKSG) the composition is skewed to basic and acidic residues. V86 carries the post-translational modification Valine amide. The propeptide occupies 90-149 (AAPPVFQTPLVQDKISGFIPSETESPVIGEFAFPGSVFMDDEEALGAEEEPMDDEDLEFY). Valine amide is present on V156. Residues 160–175 (GIDDYLLQEKLKDFIE) constitute a propeptide that is removed on maturation. A valine amide mark is found at V182, V190, V198, V206, V214, V222, V230, V238, and V246. A propeptide spanning residues 250-259 (EADPSFLFED) is cleaved from the precursor. Position 266 is a valine amide (V266). The propeptide occupies 270–300 (SLDFLGGANWYNPYDVTMEPQSEGSDLQGFS). Position 307 is a valine amide (V307). Positions 311–319 (DAFDMFEFS) are excised as a propeptide. Residue V326 is modified to Valine amide. Positions 330–338 (DQDEMFDFS) are excised as a propeptide. Valine amide is present on V345. A propeptide spanning residues 349–357 (DLQEFFDLS) is cleaved from the precursor. V364 carries the valine amide modification. A propeptide spanning residues 368–376 (EFDDEIDFS) is cleaved from the precursor. V383 carries the post-translational modification Valine amide. Positions 387-395 (ENDDDFDLS) are excised as a propeptide. V402 bears the Valine amide mark. Positions 406–414 (ENDDEFDLS) are excised as a propeptide. V421 carries the post-translational modification Valine amide. The span at 424 to 434 (RENDDELEFSK) shows a compositional bias: basic and acidic residues. A disordered region spans residues 424-528 (RENDDELEFS…NNDDLDFSKR (105 aa)). Positions 425–433 (ENDDELEFS) are excised as a propeptide. The residue at position 440 (V440) is a Valine amide. Basic and acidic residues predominate over residues 441 to 452 (GKREDDEIDFSK). Positions 444–451 (EDDEIDFS) are excised as a propeptide. V458 is modified (valine amide). Basic and acidic residues predominate over residues 459-471 (GKRENDGEIDFSK). Residues 462–470 (ENDGEIDFS) constitute a propeptide that is removed on maturation. V477 is subject to Valine amide. The segment covering 478-490 (GKRENDDEIDFSK) has biased composition (basic and acidic residues). Residues 481–489 (ENDDEIDFS) constitute a propeptide that is removed on maturation. V496 carries the post-translational modification Valine amide. Residues 497 to 508 (GKREDGEIDFSK) show a composition bias toward basic and acidic residues. A propeptide spanning residues 500–507 (EDGEIDFS) is cleaved from the precursor. V514 bears the Valine amide mark. Residues 515–527 (GKRENNDDLDFSK) are compositionally biased toward basic and acidic residues. A propeptide spanning residues 518-526 (ENNDDLDFS) is cleaved from the precursor. Position 533 is a valine amide (V533). A propeptide spanning residues 537 to 545 (EVDDEIDFS) is cleaved from the precursor. The interval 549-634 (RQFVGKREND…RQFVGKREND (86 aa)) is disordered. V552 is modified (valine amide). The span at 553–565 (GKRENDDDLDFSK) shows a compositional bias: basic and acidic residues. Positions 556–564 (ENDDDLDFS) are excised as a propeptide. V571 carries the valine amide modification. The segment covering 572–584 (GKRENDDDLEFSK) has biased composition (basic and acidic residues). Positions 575–583 (ENDDDLEFS) are excised as a propeptide. At V590 the chain carries Valine amide. Residues 594 to 602 (ENDPLLDFS) constitute a propeptide that is removed on maturation. The residue at position 609 (V609) is a Valine amide. Positions 610 to 622 (GKRENDDDLDFSK) are enriched in basic and acidic residues. Residues 613-621 (ENDDDLDFS) constitute a propeptide that is removed on maturation. Valine amide is present on V628. A propeptide spanning residues 632–640 (ENDPLIDFS) is cleaved from the precursor. V647 bears the Valine amide mark. A propeptide spanning residues 651–659 (ESDGDFELS) is cleaved from the precursor. A Valine amide modification is found at V666. A propeptide spanning residues 670 to 677 (DVDGPGLS) is cleaved from the precursor. V684 is modified (valine amide). Residues 688 to 695 (EDYDIDFA) constitute a propeptide that is removed on maturation. V702 carries the post-translational modification Valine amide. Residues 706-714 (GNEDEFEMS) constitute a propeptide that is removed on maturation. V721 is subject to Valine amide. A propeptide spanning residues 724-757 (RNFEELDQDFLRHMHDILDKRIPQFVSLPSLTAA) is cleaved from the precursor. V764 carries the valine amide modification. Positions 768 to 812 (SDAAFLETLRHLRDYVGGQDEQNVSEFSYQHPYPSDLNDVGLIQQ) are excised as a propeptide. V819 carries the post-translational modification Valine amide. A propeptide spanning residues 823 to 862 (GGDVDDINTTYRLGDFVSQPMSFVEEPSWLCRQLNAFGIS) is cleaved from the precursor.

As to expression, expressed abundantly in the abdominal ganglion, much less in the pedal and cerebral ganglia, and rarely in the buccal and pleural ganglia.

The protein resides in the secreted. In terms of biological role, PRQFV-amide may act as a modulator within the feeding system as well as in other systems of Aplysia. In Aplysia californica (California sea hare), this protein is Protein PRQFV-amide.